The chain runs to 95 residues: Probable dolichol-phosphate mannosyltransferase subunit 3 (95 aa).

2 helical membrane-spanning segments follow: residues 10–30 (AHVI…VPVL) and 44–64 (APFF…VYGV).

The protein belongs to the DPM3 family.

Its subcellular location is the endoplasmic reticulum membrane. It functions in the pathway protein modification; protein glycosylation. In terms of biological role, stabilizer subunit of the dolichol-phosphate-mannose synthase complex. This is Probable dolichol-phosphate mannosyltransferase subunit 3 (dpm-3) from Caenorhabditis elegans.